The sequence spans 121 residues: Ribosome-binding factor A (121 aa).

The protein belongs to the RbfA family. In terms of assembly, monomer. Binds 30S ribosomal subunits, but not 50S ribosomal subunits or 70S ribosomes.

It is found in the cytoplasm. One of several proteins that assist in the late maturation steps of the functional core of the 30S ribosomal subunit. Associates with free 30S ribosomal subunits (but not with 30S subunits that are part of 70S ribosomes or polysomes). Required for efficient processing of 16S rRNA. May interact with the 5'-terminal helix region of 16S rRNA. The sequence is that of Ribosome-binding factor A from Lactobacillus acidophilus (strain ATCC 700396 / NCK56 / N2 / NCFM).